The sequence spans 262 residues: Adenosylcobinamide-GDP ribazoletransferase (262 aa).

5 consecutive transmembrane segments (helical) span residues 41–61 (AFPLAAILITLPAAAIAFILG), 65–85 (ASSLFSAFLVVAVQAMVTGAL), 115–132 (IGTYGAVALILSFGLRVS), 134–156 (LAAFLPLLTPTGGGIALLATAAL), and 195–215 (GVLLALVLFFLAGIPTVAVWL).

This sequence belongs to the CobS family. The cofactor is Mg(2+).

The protein resides in the cell inner membrane. It carries out the reaction alpha-ribazole + adenosylcob(III)inamide-GDP = adenosylcob(III)alamin + GMP + H(+). The enzyme catalyses alpha-ribazole 5'-phosphate + adenosylcob(III)inamide-GDP = adenosylcob(III)alamin 5'-phosphate + GMP + H(+). The protein operates within cofactor biosynthesis; adenosylcobalamin biosynthesis; adenosylcobalamin from cob(II)yrinate a,c-diamide: step 7/7. In terms of biological role, joins adenosylcobinamide-GDP and alpha-ribazole to generate adenosylcobalamin (Ado-cobalamin). Also synthesizes adenosylcobalamin 5'-phosphate from adenosylcobinamide-GDP and alpha-ribazole 5'-phosphate. The sequence is that of Adenosylcobinamide-GDP ribazoletransferase from Rhizobium meliloti (strain 1021) (Ensifer meliloti).